The following is a 434-amino-acid chain: Protein trichome birefringence-like 3 (434 aa).

The helical; Signal-anchor for type II membrane protein transmembrane segment at 15–35 (IPLSIIVLVLCGFMFFILLYT) threads the bilayer. The GDS motif signature appears at 166–168 (GDS). The short motif at 413–427 (DCIHWCLPGLPDTWN) is the DCXHWCLPGXXDXWN motif element.

This sequence belongs to the PC-esterase family. TBL subfamily.

It is found in the golgi apparatus membrane. Functionally, involved in secondary cell wall cellulose deposition. Required for normal stem development. May act as a bridging protein that binds pectin and other cell wall polysaccharides. Probably involved in maintaining esterification of pectins. May be involved in the specific O-acetylation of cell wall polymers. The polypeptide is Protein trichome birefringence-like 3 (TBL3) (Arabidopsis thaliana (Mouse-ear cress)).